The sequence spans 178 residues: Plasmid transfer protein TraF (178 aa).

The first 30 residues, 1 to 30 (MSRILKRIAAGVVIAGVAALLLAAGGYAAG), serve as a signal peptide directing secretion.

It belongs to the peptidase S26C family.

The protein localises to the periplasm. Its function is as follows. Required for donor-specific phage sensitivity. May be involved in pilus assembly. The protein is Plasmid transfer protein TraF (traF) of Escherichia coli.